Reading from the N-terminus, the 322-residue chain is NADH-quinone oxidoreductase subunit H (322 aa).

9 helical membrane passes run Phe-15–Val-35, Asn-50–Phe-69, Phe-81–Ile-101, Ile-114–Gly-134, Ala-149–Ala-169, Ile-186–Val-206, Phe-237–Phe-257, Ile-265–Ile-285, and Trp-302–Val-322.

Belongs to the complex I subunit 1 family. NDH-1 is composed of 13 different subunits. Subunits NuoA, H, J, K, L, M, N constitute the membrane sector of the complex.

Its subcellular location is the cell membrane. It catalyses the reaction a quinone + NADH + 5 H(+)(in) = a quinol + NAD(+) + 4 H(+)(out). Its function is as follows. NDH-1 shuttles electrons from NADH, via FMN and iron-sulfur (Fe-S) centers, to quinones in the respiratory chain. The immediate electron acceptor for the enzyme in this species is believed to be ubiquinone. Couples the redox reaction to proton translocation (for every two electrons transferred, four hydrogen ions are translocated across the cytoplasmic membrane), and thus conserves the redox energy in a proton gradient. This subunit may bind ubiquinone. This chain is NADH-quinone oxidoreductase subunit H, found in Buchnera aphidicola subsp. Acyrthosiphon pisum (strain 5A).